Consider the following 86-residue polypeptide: Kappa-theraphotoxin-Cg1a 3 (86 aa).

The first 21 residues, 1-21 (MKVSVLITLAVLGVMFVWASA), serve as a signal peptide directing secretion. Residues 22-50 (AELEERGSDQRDSPAWLKSMERIFRSEER) constitute a propeptide that is removed on maturation. 3 cysteine pairs are disulfide-bonded: cysteine 52/cysteine 66, cysteine 59/cysteine 71, and cysteine 65/cysteine 78. Phenylalanine amide is present on phenylalanine 84.

The protein belongs to the neurotoxin 10 (Hwtx-1) family. 28 (Jztx-11) subfamily. In terms of tissue distribution, expressed by the venom gland.

Its subcellular location is the secreted. In terms of biological role, this toxin acts as a voltage-dependent gating-modifier. It inhibits the sodium conductance (IC(50)=124 nM) and slows the fast inactivation (EC(50)=1180 nM) of Nav1.5/SCN5A. It significantly shifts the activation to more depolarized voltages and decreases the deactivation of Nav1.5 currents upon extreme depolarization, but only slightly affects voltage-dependence of steady-state inactivation. In addition, this toxin causes an approximately five-fold decrease in the rate of recovery from inactivation and an approximately 1.9-fold reduction in the closed-state inactivation rate. This toxin integrates the functions of site 3 toxins (alpha-scorpion toxins) with site 4 toxins (beta-scorpion and spider toxins) by targeting multiple sites on Nav1.5. Also shows inhibition of voltage-gated potassium channels (5 uM completely inhibits Kv2.1/KCNB1, whereas 5 uM moderately inhibits Kv4.2/KCND2 Kv4.1/KCND1 channels). The sequence is that of Kappa-theraphotoxin-Cg1a 3 from Chilobrachys guangxiensis (Chinese earth tiger tarantula).